The primary structure comprises 210 residues: ATP-dependent Clp protease proteolytic subunit (210 aa).

S111 functions as the Nucleophile in the catalytic mechanism. H136 is an active-site residue.

It belongs to the peptidase S14 family. As to quaternary structure, fourteen ClpP subunits assemble into 2 heptameric rings which stack back to back to give a disk-like structure with a central cavity, resembling the structure of eukaryotic proteasomes.

The protein localises to the cytoplasm. It carries out the reaction Hydrolysis of proteins to small peptides in the presence of ATP and magnesium. alpha-casein is the usual test substrate. In the absence of ATP, only oligopeptides shorter than five residues are hydrolyzed (such as succinyl-Leu-Tyr-|-NHMec, and Leu-Tyr-Leu-|-Tyr-Trp, in which cleavage of the -Tyr-|-Leu- and -Tyr-|-Trp bonds also occurs).. Cleaves peptides in various proteins in a process that requires ATP hydrolysis. Has a chymotrypsin-like activity. Plays a major role in the degradation of misfolded proteins. The protein is ATP-dependent Clp protease proteolytic subunit of Halorhodospira halophila (strain DSM 244 / SL1) (Ectothiorhodospira halophila (strain DSM 244 / SL1)).